A 546-amino-acid polypeptide reads, in one-letter code: T-complex protein 1 subunit zeta (546 aa).

Serine 2 carries the N-acetylserine modification. Serine 249 carries the phosphoserine modification.

It belongs to the TCP-1 chaperonin family. In terms of assembly, heterooligomeric complex of about 850 to 900 kDa that forms two stacked rings, 12 to 16 nm in diameter.

The protein resides in the cytoplasm. Functionally, molecular chaperone; assists the folding of proteins upon ATP hydrolysis. Known to play a role, in vitro, in the folding of actin and tubulin. In yeast may play a role in mitotic spindle formation. The protein is T-complex protein 1 subunit zeta (CCT6) of Saccharomyces cerevisiae (strain ATCC 204508 / S288c) (Baker's yeast).